A 531-amino-acid chain; its full sequence is SWI/SNF-related matrix-associated actin-dependent regulator of chromatin subfamily D member 2 (531 aa).

The interval 20 to 85 (AVAAALGAPP…MSPGSRMPMA (66 aa)) is disordered. Positions 34 to 45 (PGMLPNPALRGP) are enriched in low complexity. R81 and R104 each carry asymmetric dimethylarginine. Residues 202-226 (FSPSKADGDNSGTAGTPGGTPAADK) form a disordered region. S203 carries the post-translational modification Phosphoserine. Phosphothreonine is present on T217. A Glycyl lysine isopeptide (Lys-Gly) (interchain with G-Cter in SUMO2) cross-link involves residue K226. Residues 306–383 (HQPPQYKLDP…PMKLAGLLQH (78 aa)) form the SWIB/MDM2 domain.

Belongs to the SMARCD family. Component of the multiprotein chromatin-remodeling complexes SWI/SNF: SWI/SNF-A (BAF), SWI/SNF-B (PBAF) and related complexes. The canonical complex contains a catalytic subunit (either SMARCA4/BRG1/BAF190A or SMARCA2/BRM/BAF190B), and at least SMARCE1, ACTL6A/BAF53, SMARCC1/BAF155, SMARCC2/BAF170, and SMARCB1/SNF5/BAF47. Other subunits specific to each of the complexes may also be present permitting several possible combinations developmentally and tissue specific. Component of the BAF complex, which includes at least actin (ACTB), ARID1A/BAF250A, ARID1B/BAF250B, SMARCA2/BRM, SMARCA4/BRG1, ACTL6A/BAF53, ACTL6B/BAF53B, SMARCE1/BAF57, SMARCC1/BAF155, SMARCC2/BAF170, SMARCB1/SNF5/INI1, and one or more SMARCD1/BAF60A, SMARCD2/BAF60B, or SMARCD3/BAF60C. In muscle cells, the BAF complex also contains DPF3. Component of the SWI/SNF-B (PBAF) chromatin remodeling complex, at least composed of SMARCA4/BRG1, SMARCB1/BAF47/SNF5, ACTL6A/BAF53A or ACTL6B/BAF53B, SMARCE1/BAF57, SMARCD1/BAF60A, SMARCD2/BAF60B, perhaps SMARCD3/BAF60C, SMARCC1/BAF155, SMARCC2/BAF170, PBRM1/BAF180, ARID2/BAF200 and actin (ACTB). Interacts with UNKL. Interacts with CEBPE. Ubiquitinated through a signaling process involving RAC1 and the RING finger protein UNKL.

Its subcellular location is the nucleus. In terms of biological role, involved in transcriptional activation and repression of select genes by chromatin remodeling (alteration of DNA-nucleosome topology). Component of SWI/SNF chromatin remodeling complexes that carry out key enzymatic activities, changing chromatin structure by altering DNA-histone contacts within a nucleosome in an ATP-dependent manner. Critical regulator of myeloid differentiation, controlling granulocytopoiesis and the expression of genes involved in neutrophil granule formation. In Rattus norvegicus (Rat), this protein is SWI/SNF-related matrix-associated actin-dependent regulator of chromatin subfamily D member 2 (Smarcd2).